We begin with the raw amino-acid sequence, 283 residues long: 4-diphosphocytidyl-2-C-methyl-D-erythritol kinase (283 aa).

Lysine 11 is a catalytic residue. Residue 94-104 participates in ATP binding; the sequence is PVAAGLAGGSA. Aspartate 136 is a catalytic residue.

The protein belongs to the GHMP kinase family. IspE subfamily.

The catalysed reaction is 4-CDP-2-C-methyl-D-erythritol + ATP = 4-CDP-2-C-methyl-D-erythritol 2-phosphate + ADP + H(+). The protein operates within isoprenoid biosynthesis; isopentenyl diphosphate biosynthesis via DXP pathway; isopentenyl diphosphate from 1-deoxy-D-xylulose 5-phosphate: step 3/6. Its function is as follows. Catalyzes the phosphorylation of the position 2 hydroxy group of 4-diphosphocytidyl-2C-methyl-D-erythritol. In Acetivibrio thermocellus (strain ATCC 27405 / DSM 1237 / JCM 9322 / NBRC 103400 / NCIMB 10682 / NRRL B-4536 / VPI 7372) (Clostridium thermocellum), this protein is 4-diphosphocytidyl-2-C-methyl-D-erythritol kinase.